The following is a 129-amino-acid chain: uncharacterized protein (129 aa).

The 124-residue stretch at 6-129 (QVHHIAIIAT…DGLPLELYEQ (124 aa)) folds into the VOC domain. Residues His-9, Glu-57, His-78, and Glu-125 each contribute to the a divalent metal cation site.

This sequence to B.subtilis YwkD.

This is an uncharacterized protein from Escherichia coli (strain K12).